Here is a 91-residue protein sequence, read N- to C-terminus: Protein LURE 1.3 (91 aa).

Positions 1 to 20 are cleaved as a signal peptide; that stretch reads MKLPFIFLITLLIFVSSCTS. N-linked (GlcNAc...) asparagine glycosylation is present at Asn-24. 3 cysteine pairs are disulfide-bonded: Cys-59-Cys-76, Cys-62-Cys-83, and Cys-66-Cys-85. The interval 68–88 is PRK6 binding; it reads RRGKYIRTCSFERKLCRCSIS.

Belongs to the DEFL family. In terms of assembly, binds to PRK6 LRRs. As to expression, expressed in the pistil. Detected exclusively in the synergid cells.

It is found in the secreted. Its function is as follows. Pollen tube attractants guiding pollen tubes to the ovular micropyle. Attracts pollen tubes from both A.thaliana and A.lyrata. The sequence is that of Protein LURE 1.3 from Arabidopsis thaliana (Mouse-ear cress).